The sequence spans 541 residues: uncharacterized protein (541 aa).

Helical transmembrane passes span 4–23 (FVAN…LAIG), 30–47 (FSLG…FAAV), 57–79 (VYIL…AFFA), 91–113 (LAIT…IHLN), and 156–178 (LVAY…GLCA). 2 RCK C-terminal domains span residues 187-271 (QEAH…VLGD) and 273-354 (LPGD…LFGD). 5 helical membrane passes run 362–384 (FNLF…EVPL), 389–411 (ALSL…VGRS), 424–446 (LALR…GASF), 456–478 (LTII…VVGY), and 516–538 (LGYT…VVLF).

This sequence belongs to the AAE transporter (TC 2.A.81) family.

Its subcellular location is the cell membrane. This is an uncharacterized protein from Corynebacterium diphtheriae (strain ATCC 700971 / NCTC 13129 / Biotype gravis).